The following is a 507-amino-acid chain: MKTRYFLLLGICMLSCRTDEKKQVQKEVDKPNVLFIAVDDLNNMISPIANFSNIQTPNFDRLAAMGVTFTDAHCPAPLCGPSRSAIMTGLRPSTTGIYGMTPDNKIRRDDNEATKDIIFLPEYFKKNGYHSMGIGKLFHNYAPDGMFDEGGGRVKGFGPFPEKRFVWDGFGTSKSRKGQYGRTNTDWGAFPESDTLMPDHQAVNWVLERFNKNYKQPFFLALGFQRPHVPLYVPQKWFDLYPLESIQTPPYQSDDLNDIPPVGLKINDLPMMPSTEWAINSGEWKKIIQAYLACVSFVDYELGRVLDALKNSPYAKNTIIVLWSDHGYRLGEKGTFAKHALWESATKAPLFFAGPNLPKGKKIDAPVEMLSIYPTLLELSGLQAYARNEAKSLVRMMQKNEGLKDTYAITTYGKNNHAVKVDGYRYIQYEDGTEEFYDNASDPNEWINEANNFKFKSKIEALKALLPKTNATWDAESNYTFQPYFVEQKTRGNVNAAKAVKVIGAER.

The N-terminal stretch at 1-18 (MKTRYFLLLGICMLSCRT) is a signal peptide. Residues aspartate 39, aspartate 40, and cysteine 79 each contribute to the Ca(2+) site. Cysteine 79 (nucleophile) is an active-site residue. Cysteine 79 carries the 3-oxoalanine (Cys) modification. Histidine 139 is an active-site residue. The Ca(2+) site is built by aspartate 325 and histidine 326.

The protein belongs to the sulfatase family. Ca(2+) is required as a cofactor. The conversion to 3-oxoalanine (also known as C-formylglycine, FGly), of a serine or cysteine residue in prokaryotes and of a cysteine residue in eukaryotes, is critical for catalytic activity. This post-translational modification is severely defective in multiple sulfatase deficiency (MSD).

It is found in the periplasm. Its function is as follows. Sulfatase that may be involved in ulvan degradation. Ulvan is the main polysaccharide component of the Ulvales (green seaweed) cell wall. It is composed of disaccharide building blocks comprising 3-sulfated rhamnose (Rha3S) linked to D-glucuronic acid (GlcA), L-iduronic acid (IduA), or D-xylose (Xyl). Has no activity on different ulvan polymers. The protein is Sulfatase of Formosa agariphila (strain DSM 15362 / KCTC 12365 / LMG 23005 / KMM 3901 / M-2Alg 35-1).